The following is a 152-amino-acid chain: SsrA-binding protein (152 aa).

This sequence belongs to the SmpB family.

Its subcellular location is the cytoplasm. Required for rescue of stalled ribosomes mediated by trans-translation. Binds to transfer-messenger RNA (tmRNA), required for stable association of tmRNA with ribosomes. tmRNA and SmpB together mimic tRNA shape, replacing the anticodon stem-loop with SmpB. tmRNA is encoded by the ssrA gene; the 2 termini fold to resemble tRNA(Ala) and it encodes a 'tag peptide', a short internal open reading frame. During trans-translation Ala-aminoacylated tmRNA acts like a tRNA, entering the A-site of stalled ribosomes, displacing the stalled mRNA. The ribosome then switches to translate the ORF on the tmRNA; the nascent peptide is terminated with the 'tag peptide' encoded by the tmRNA and targeted for degradation. The ribosome is freed to recommence translation, which seems to be the essential function of trans-translation. This Rickettsia canadensis (strain McKiel) protein is SsrA-binding protein.